The following is a 399-amino-acid chain: uncharacterized protein (399 aa).

The disordered stretch occupies residues 375 to 399 (AAGGHRGSHGKSEQAATVRVVDDRR).

This sequence belongs to the mycobacterial PPE family.

This is an uncharacterized protein from Mycobacterium tuberculosis (strain CDC 1551 / Oshkosh).